A 427-amino-acid chain; its full sequence is MFVDQVKIYVKGGDGGNGMVAYRREKYVPKGGPAGGDGGKGADVVFVVEEGLRTLMDFRYQRHFKADRGQHGMSKGQHGRKSEDLIVKVPPGTIVKDEKTGEILADLVTHEQTAVIARGGRGGRGNSRFATATNPAPEIAENGEPGQERDVTLELKVLADVGLVGFPSVGKSTLLSVVSSARPKIAEYHFTTIVPNLGVVETGDNRSFVMADLPGLIEGAHSGVGLGHQFLRHIERTRVIVHVIDMSGLEGREPYEDYVTINNELKEYNMRLTERPQVVVANKMDMPDAEENLQAFKEKLGDEVKIFPISAVTKQGVRDLLFEVANLLETTPEFPMYDDVEESEASVMYKFESESNFEITRESDGTFVISGYDIEKTFKMTDFSRDESVRRFARQMRGMGIDEALRARGATDGDIVKILEYQFEFID.

The 158-residue stretch at 1–158 folds into the Obg domain; that stretch reads MFVDQVKIYV…RDVTLELKVL (158 aa). The 171-residue stretch at 159 to 329 folds into the OBG-type G domain; the sequence is ADVGLVGFPS…LLFEVANLLE (171 aa). Residues 165 to 172, 190 to 194, 212 to 215, 282 to 285, and 310 to 312 contribute to the GTP site; these read GFPSVGKS, FTTIV, DLPG, NKMD, and SAV. Positions 172 and 192 each coordinate Mg(2+). Residues 349 to 427 enclose the OCT domain; sequence YKFESESNFE…ILEYQFEFID (79 aa).

The protein belongs to the TRAFAC class OBG-HflX-like GTPase superfamily. OBG GTPase family. In terms of assembly, monomer. Mg(2+) serves as cofactor.

The protein localises to the cytoplasm. An essential GTPase which binds GTP, GDP and possibly (p)ppGpp with moderate affinity, with high nucleotide exchange rates and a fairly low GTP hydrolysis rate. Plays a role in control of the cell cycle, stress response, ribosome biogenesis and in those bacteria that undergo differentiation, in morphogenesis control. This chain is GTPase Obg, found in Bacillus mycoides (strain KBAB4) (Bacillus weihenstephanensis).